Consider the following 325-residue polypeptide: Tagatose 1,6-diphosphate aldolase 1 (325 aa).

Belongs to the aldolase LacD family.

The enzyme catalyses D-tagatofuranose 1,6-bisphosphate = D-glyceraldehyde 3-phosphate + dihydroxyacetone phosphate. It participates in carbohydrate metabolism; D-tagatose 6-phosphate degradation; D-glyceraldehyde 3-phosphate and glycerone phosphate from D-tagatose 6-phosphate: step 2/2. This chain is Tagatose 1,6-diphosphate aldolase 1 (lacD1), found in Streptococcus pyogenes serotype M1.